The primary structure comprises 195 residues: Imidazoleglycerol-phosphate dehydratase (195 aa).

The protein belongs to the imidazoleglycerol-phosphate dehydratase family.

The protein localises to the cytoplasm. The enzyme catalyses D-erythro-1-(imidazol-4-yl)glycerol 3-phosphate = 3-(imidazol-4-yl)-2-oxopropyl phosphate + H2O. It functions in the pathway amino-acid biosynthesis; L-histidine biosynthesis; L-histidine from 5-phospho-alpha-D-ribose 1-diphosphate: step 6/9. The protein is Imidazoleglycerol-phosphate dehydratase of Desulfosudis oleivorans (strain DSM 6200 / JCM 39069 / Hxd3) (Desulfococcus oleovorans).